Consider the following 922-residue polypeptide: Coronin-7 (922 aa).

4 WD repeats span residues 75–115, 124–163, 166–205, and 209–253; these read CHSD…EALP, PEEL…HLTE, AHKD…QASQ, and AHEN…SALA. The disordered stretch occupies residues 386–462; it reads NPAHRPHPRF…TSPSQRSLQS (77 aa). A compositionally biased stretch (low complexity) spans 423–456; that stretch reads SEGFSSPSSLVSPSTPSSLGLSLSSTSGIGTSPS. 2 positions are modified to phosphoserine: Ser459 and Ser462. Lys469 is covalently cross-linked (Glycyl lysine isopeptide (Lys-Gly) (interchain with G-Cter in ubiquitin)). WD repeat units lie at residues 539 to 579, 589 to 629, 632 to 671, and 725 to 765; these read QNGA…LKNV, GHTE…EQLR, GHQD…LPLQ, and DVAP…PFFL. Residues 854–922 are disordered; that stretch reads LQPPGMTPVS…FEGVDEDEWD (69 aa). The residue at position 874 (Thr874) is a Phosphothreonine. Positions 881–893 are enriched in basic and acidic residues; the sequence is LEEKSDQQKKEEL. Ser912 is modified (phosphoserine).

Belongs to the WD repeat coronin family. In terms of assembly, interacts with clathrin adapter AP1 complex. This interaction takes place at Golgi membranes and not AP1-positive endosomal membranes. Interacts (when ubiquitinated at Lys-469) with EPS15. The membrane-associated form is phosphorylated on tyrosine residues. Post-translationally, ubiquitinated via 'Lys-33'-linked ubiquitin chains by the BCR(KLHL20) E3 ubiquitin ligase complex: 'Lys-33'-linked ubiquitination promotes interaction with EPS15 and facilitates actin polymerization at the trans-Golgi network, thereby facilitating post-Golgi trafficking. Deubiquitinated by ZRANB1/TRABID.

Its subcellular location is the golgi apparatus membrane. The protein resides in the golgi apparatus. The protein localises to the trans-Golgi network. It localises to the cytoplasmic vesicle. It is found in the cytoplasm. Its subcellular location is the cytosol. In terms of biological role, F-actin regulator involved in anterograde Golgi to endosome transport: upon ubiquitination via 'Lys-33'-linked ubiquitin chains by the BCR(KLHL20) E3 ubiquitin ligase complex, interacts with EPS15 and localizes to the trans-Golgi network, where it promotes actin polymerization, thereby facilitating post-Golgi trafficking. May play a role in the maintenance of the Golgi apparatus morphology. The chain is Coronin-7 (Coro7) from Rattus norvegicus (Rat).